The chain runs to 685 residues: Translation initiation factor IF-2 (685 aa).

The disordered stretch occupies residues 60–79; sequence ISLAKTREPSKEKTEAKKPP. Over residues 64 to 79 the composition is skewed to basic and acidic residues; that stretch reads KTREPSKEKTEAKKPP. The tr-type G domain occupies 175–352; it reads NRPPVVTVMG…DIRCIPDSPV (178 aa). Positions 184–191 are G1; it reads GHVDHGKT. Residue 184–191 coordinates GTP; that stretch reads GHVDHGKT. Positions 209 to 213 are G2; the sequence is GITQS. Residues 230–233 form a G3 region; it reads DTPG. GTP-binding positions include 230–234 and 284–287; these read DTPGH and NKID. Residues 284–287 form a G4 region; sequence NKID. The tract at residues 321-323 is G5; the sequence is SAR.

This sequence belongs to the TRAFAC class translation factor GTPase superfamily. Classic translation factor GTPase family. IF-2 subfamily.

The protein localises to the cytoplasm. In terms of biological role, one of the essential components for the initiation of protein synthesis. Protects formylmethionyl-tRNA from spontaneous hydrolysis and promotes its binding to the 30S ribosomal subunits. Also involved in the hydrolysis of GTP during the formation of the 70S ribosomal complex. The protein is Translation initiation factor IF-2 of Fervidobacterium nodosum (strain ATCC 35602 / DSM 5306 / Rt17-B1).